A 698-amino-acid polypeptide reads, in one-letter code: MIPQLLQRSSRACPRYNPALYRLSTTSQQRPGLTQTFWTSAPRREQPRTPTDSKPTTTKPSAVFPANKKATKQNDPLVTVEKSAPEQRKADWAIMKEMTRYLWPKDDWGTKLRVSLAVSLLIGAKVLNVQVPFYFKSIVDSMNIDVAAVGGTATTVAGAMILAYGASRIGATVFQELRNAVFASVAQNAIRKVACNVFDHLLRLDLTFHLSKQTGGLTRALDRGTKGISFILSSMVFHVLPTALEISMVCGILTYNYGAKFAALTVLTMVSYTAFTIWTTAWRTKFRRQANAADNKASTVAVDSLINYEAVKYFNNEKFEVARYDKALGQYEKNSIKVATSLALLNSGQNIIFSSALTGMMYLAANGVAEGTLTVGDLVMVNQLVFQLSVPLNFLGSVYRELRQSLLDMETLFNLQKVNANIKEKAGAKPLVLSKGGEIKFENVNFAYHPNRPILRDLSLTIPAGKKVAVVGPSGCGKSTLLRLLFRSYDVQGGRVLIDDQDIRDVDLESLRRSIGVVPQDTPLFNDTVEHNIRYGSINATHEEVVAVAKRAHVHNTIQSFPDGYETKVGERGLMISGGEKQRLAVSRILLKDPPLLFFDEATSALDTHTEQALMMNINSILRERGRTSVFVAHRLRTIFDSDLIIVLKEGHVAEMGTHRELIDRDGVYAELWSAQETMFGEDGKEKSEEENDEQKKN.

The N-terminal 23 residues, 1–23 (MIPQLLQRSSRACPRYNPALYRL), are a transit peptide targeting the mitochondrion. At 24–113 (STTSQQRPGL…PKDDWGTKLR (90 aa)) the chain is on the mitochondrial matrix side. The disordered stretch occupies residues 32–63 (GLTQTFWTSAPRREQPRTPTDSKPTTTKPSAV). Residues 48-61 (RTPTDSKPTTTKPS) show a composition bias toward low complexity. The chain crosses the membrane as a helical span at residues 114–135 (VSLAVSLLIGAKVLNVQVPFYF). The ABC transmembrane type-1 domain maps to 114-404 (VSLAVSLLIG…LGSVYRELRQ (291 aa)). Residues 136–158 (KSIVDSMNIDVAAVGGTATTVAG) are Mitochondrial intermembrane-facing. A helical membrane pass occupies residues 159 to 182 (AMILAYGASRIGATVFQELRNAVF). Over 183–231 (ASVAQNAIRKVACNVFDHLLRLDLTFHLSKQTGGLTRALDRGTKGISFI) the chain is Mitochondrial matrix. The chain crosses the membrane as a helical span at residues 232–255 (LSSMVFHVLPTALEISMVCGILTY). Position 256 (asparagine 256) is a topological domain, mitochondrial intermembrane. Residues 257-277 (YGAKFAALTVLTMVSYTAFTI) form a helical membrane-spanning segment. At 278-343 (WTTAWRTKFR…NSIKVATSLA (66 aa)) the chain is on the mitochondrial matrix side. Residues 283-287 (RTKFR) and 346-349 (NSGQ) contribute to the glutathione site. Residues 344–362 (LLNSGQNIIFSSALTGMMY) form a helical membrane-spanning segment. Over 363–377 (LAANGVAEGTLTVGD) the chain is Mitochondrial intermembrane. A helical membrane pass occupies residues 378-399 (LVMVNQLVFQLSVPLNFLGSVY). Position 396 (glycine 396) interacts with glutathione. At 400 to 698 (RELRQSLLDM…EEENDEQKKN (299 aa)) the chain is on the mitochondrial matrix side. The ABC transporter domain maps to 439–675 (IKFENVNFAY…DGVYAELWSA (237 aa)). ATP is bound by residues tyrosine 448 and 472-483 (GPSGCGKSTLLR). Residues 679–698 (MFGEDGKEKSEEENDEQKKN) are disordered. Residues 682 to 698 (EDGKEKSEEENDEQKKN) are compositionally biased toward basic and acidic residues.

The protein belongs to the ABC transporter superfamily. ABCB family. Heavy Metal importer (TC 3.A.1.210) subfamily. Homodimer.

The protein localises to the mitochondrion inner membrane. Its function is as follows. Performs an essential function in the generation of cytoplasmic iron-sulfur proteins by mediating the ATP-dependent export of Fe/S cluster precursors synthesized by NFS1 and other mitochondrial proteins. Hydrolyzes ATP. Binds glutathione and may function by transporting a glutathione-conjugated iron-sulfur compound. The polypeptide is Iron-sulfur clusters transporter ATM1, mitochondrial (Gibberella zeae (strain ATCC MYA-4620 / CBS 123657 / FGSC 9075 / NRRL 31084 / PH-1) (Wheat head blight fungus)).